Consider the following 750-residue polypeptide: Catalase-peroxidase (750 aa).

The segment at residues 112–235 (WHSAGTYRIG…LGAAHMGLIY (124 aa)) is a cross-link (tryptophyl-tyrosyl-methioninium (Trp-Tyr) (with M-261)). The active-site Proton acceptor is the His113. A cross-link (tryptophyl-tyrosyl-methioninium (Tyr-Met) (with W-112)) is located at residues 235-261 (YVNPEGHNGNPDPVEAASYIRETFGRM). A heme b-binding site is contributed by His276.

The protein belongs to the peroxidase family. Peroxidase/catalase subfamily. Homodimer or homotetramer. Requires heme b as cofactor. Formation of the three residue Trp-Tyr-Met cross-link is important for the catalase, but not the peroxidase activity of the enzyme.

The catalysed reaction is H2O2 + AH2 = A + 2 H2O. The enzyme catalyses 2 H2O2 = O2 + 2 H2O. In terms of biological role, bifunctional enzyme with both catalase and broad-spectrum peroxidase activity. The protein is Catalase-peroxidase of Christiangramia forsetii (strain DSM 17595 / CGMCC 1.15422 / KT0803) (Gramella forsetii).